We begin with the raw amino-acid sequence, 163 residues long: Bursicon (163 aa).

The N-terminal stretch at 1–23 (MKSSVCVLLKVLACILLPGGLNA) is a signal peptide. Cystine bridges form between cysteine 39-cysteine 88, cysteine 53-cysteine 102, cysteine 63-cysteine 123, cysteine 67-cysteine 125, and cysteine 85-cysteine 128. In terms of domain architecture, CTCK spans 39-129 (CQVTPVIHVL…PLECMCRPCT (91 aa)).

In terms of assembly, heterodimer of burs and pburs.

Its subcellular location is the secreted. In terms of biological role, final heterodimeric neurohormone released at the end of the molting cycle, involved in the sclerotization (tanning) of the insect cuticle, melanization and wing spreading. This Aedes aegypti (Yellowfever mosquito) protein is Bursicon.